The sequence spans 359 residues: Pheromone receptor 1 (359 aa).

7 consecutive transmembrane segments (helical) span residues 5-25 (VTPF…GWHI), 33-53 (ITLS…SVAW), 71-87 (LRHA…LVIA), 110-130 (IIID…LMIV), 147-167 (FLSL…IVSF), 206-226 (LLVL…GSVS), and 268-288 (LILS…MFGL). The interval 335 to 359 (TSGGIDGSPHSEKFSINTPTKYEEA) is disordered. Positions 348 to 359 (FSINTPTKYEEA) are enriched in polar residues.

It belongs to the G-protein coupled receptor 4 family.

The protein resides in the membrane. Its function is as follows. Receptor for the A2 pheromone, a prenylated mating factor. This chain is Pheromone receptor 1 (PRA1), found in Ustilago hordei (Barley covered smut fungus).